Reading from the N-terminus, the 349-residue chain is Nicotinate-nucleotide--dimethylbenzimidazole phosphoribosyltransferase (349 aa).

Glutamate 316 serves as the catalytic Proton acceptor.

It belongs to the CobT family.

It carries out the reaction 5,6-dimethylbenzimidazole + nicotinate beta-D-ribonucleotide = alpha-ribazole 5'-phosphate + nicotinate + H(+). The protein operates within nucleoside biosynthesis; alpha-ribazole biosynthesis; alpha-ribazole from 5,6-dimethylbenzimidazole: step 1/2. Catalyzes the synthesis of alpha-ribazole-5'-phosphate from nicotinate mononucleotide (NAMN) and 5,6-dimethylbenzimidazole (DMB). This is Nicotinate-nucleotide--dimethylbenzimidazole phosphoribosyltransferase from Photorhabdus laumondii subsp. laumondii (strain DSM 15139 / CIP 105565 / TT01) (Photorhabdus luminescens subsp. laumondii).